The following is a 446-amino-acid chain: MGSEIPDYYNKTLASENNTVATRNSGFPVWEDYKGSVDDLQYFLIGLYTFVSLLGFMGNLLILMAVMRKRNQKTTVNFLIGNLAFSDILVVLFCSPFTLTSVLLDQWMFGKVMCHIMPFLQCVTVLVSTLILISIAIVRYHMIKHPVSNNLTANHGYFLIATVWTLGLAICSPLPVFHSLVELQESFGSAWLSSRYLCVESWPSDSYRIAFTISLLLVQYILPLVCLTVSHTSVCRTISCGLSSQDSKLEENEMINLTLQPAKRSGPQAKLSHHPKWTYSFIRRHRRRYSKKTACVRPAPAGPALESREGRPPGKVGSMQSQPPPSNKFMPGVPTCFEVKPEENSDVPEMRVSRSIMRLRKRSRSVFYRLTVLILVFAVSWMPLHLFHVVTDFNDNLISNRHFKLVYCICHLLGMMSCCLNPILYGFLNNGIKADLMSLIHCLHVS.

The Extracellular segment spans residues 1–42 (MGSEIPDYYNKTLASENNTVATRNSGFPVWEDYKGSVDDLQY). Asn10 and Asn17 each carry an N-linked (GlcNAc...) asparagine glycan. A helical membrane pass occupies residues 43–63 (FLIGLYTFVSLLGFMGNLLIL). Topologically, residues 64–77 (MAVMRKRNQKTTVN) are cytoplasmic. A helical transmembrane segment spans residues 78–98 (FLIGNLAFSDILVVLFCSPFT). The Extracellular segment spans residues 99 to 117 (LTSVLLDQWMFGKVMCHIM). The cysteines at positions 114 and 198 are disulfide-linked. Residues 118 to 138 (PFLQCVTVLVSTLILISIAIV) traverse the membrane as a helical segment. The Cytoplasmic segment spans residues 139–156 (RYHMIKHPVSNNLTANHG). A helical membrane pass occupies residues 157–177 (YFLIATVWTLGLAICSPLPVF). At 178-208 (HSLVELQESFGSAWLSSRYLCVESWPSDSYR) the chain is on the extracellular side. The helical transmembrane segment at 209–229 (IAFTISLLLVQYILPLVCLTV) threads the bilayer. Over 230 to 369 (SHTSVCRTIS…RKRSRSVFYR (140 aa)) the chain is Cytoplasmic. The interval 297–325 (RPAPAGPALESREGRPPGKVGSMQSQPPP) is disordered. A helical membrane pass occupies residues 370-390 (LTVLILVFAVSWMPLHLFHVV). At 391–407 (TDFNDNLISNRHFKLVY) the chain is on the extracellular side. Residues 408–428 (CICHLLGMMSCCLNPILYGFL) form a helical membrane-spanning segment. Residues 429–446 (NNGIKADLMSLIHCLHVS) lie on the Cytoplasmic side of the membrane. Residue Cys442 is the site of S-palmitoyl cysteine attachment.

It belongs to the G-protein coupled receptor 1 family.

It is found in the cell membrane. In terms of biological role, receptor for neuropeptide Y and peptide YY. The activity of this receptor is mediated by G proteins that inhibit adenylate cyclase activity. Seems to be associated with food intake. Could be involved in feeding disorders. The sequence is that of Neuropeptide Y receptor type 5 (NPY5R) from Sus scrofa (Pig).